Here is a 225-residue protein sequence, read N- to C-terminus: Orotate phosphoribosyltransferase (225 aa).

Residue Lys29 participates in 5-phospho-alpha-D-ribose 1-diphosphate binding. An orotate-binding site is contributed by 37–38 (FF). 5-phospho-alpha-D-ribose 1-diphosphate is bound by residues 75-76 (YK), Arg101, Lys102, Lys105, His107, and 126-134 (DDVISAGTS). Ser130 and Arg158 together coordinate orotate.

It belongs to the purine/pyrimidine phosphoribosyltransferase family. PyrE subfamily. Homodimer. The cofactor is Mg(2+).

It carries out the reaction orotidine 5'-phosphate + diphosphate = orotate + 5-phospho-alpha-D-ribose 1-diphosphate. Its pathway is pyrimidine metabolism; UMP biosynthesis via de novo pathway; UMP from orotate: step 1/2. Catalyzes the transfer of a ribosyl phosphate group from 5-phosphoribose 1-diphosphate to orotate, leading to the formation of orotidine monophosphate (OMP). In Ralstonia pickettii (strain 12J), this protein is Orotate phosphoribosyltransferase.